A 122-amino-acid chain; its full sequence is Histone H2B type 2-K1 (122 aa).

Positions Met1–Arg30 are disordered. The span at Gly20–Arg30 shows a compositional bias: basic residues. At Lys31 the chain carries N6-(2-hydroxyisobutyryl)lysine; alternate. N6-(beta-hydroxybutyryl)lysine; alternate is present on Lys31. The residue at position 31 (Lys31) is an N6-crotonyllysine; alternate. Position 31 is an N6-glutaryllysine; alternate (Lys31). Residue Lys31 is modified to N6-succinyllysine; alternate. A Glycyl lysine isopeptide (Lys-Gly) (interchain with G-Cter in ubiquitin); alternate cross-link involves residue Lys31. At Ser33 the chain carries Phosphoserine. Lys40, Lys43, and Lys54 each carry N6-(2-hydroxyisobutyryl)lysine; alternate. Residues Lys40 and Lys43 each carry the N6-glutaryllysine; alternate modification. Position 40 is an N6-lactoyllysine; alternate (Lys40). Lys43 carries the post-translational modification N6-methyllysine. An N6-methyllysine; alternate modification is found at Lys43. Lys54 carries the post-translational modification N6,N6-dimethyllysine. At Lys54 the chain carries N6,N6-dimethyllysine; alternate. Arg76 carries the post-translational modification Dimethylated arginine. Residue Ser81 is modified to Phosphoserine. Omega-N-methylarginine occurs at positions 83 and 89. An N6-(2-hydroxyisobutyryl)lysine; alternate modification is found at Lys105. Lys105 bears the N6-glutaryllysine; alternate mark. At Lys105 the chain carries N6-lactoyllysine; alternate. Lys105 is subject to N6-methyllysine. Position 105 is an N6-methyllysine; alternate (Lys105). Ser109 carries an O-linked (GlcNAc) serine glycan. The residue at position 112 (Thr112) is a Phosphothreonine. An N6-(2-hydroxyisobutyryl)lysine; alternate mark is found at Lys113 and Lys117. 2 positions are modified to N6-(beta-hydroxybutyryl)lysine; alternate: Lys113 and Lys117. Residues Lys113 and Lys117 each carry the N6-glutaryllysine; alternate modification. Residues Lys113 and Lys117 each carry the N6-succinyllysine; alternate modification. The residue at position 113 (Lys113) is an N6-lactoyllysine; alternate. Lys113 carries the N6-malonyllysine; alternate modification. Lys113 carries the post-translational modification N6-methylated lysine; alternate. Residue Lys117 forms a Glycyl lysine isopeptide (Lys-Gly) (interchain with G-Cter in ubiquitin); alternate linkage.

It belongs to the histone H2B family. As to quaternary structure, the nucleosome is a histone octamer containing two molecules each of H2A, H2B, H3 and H4 assembled in one H3-H4 heterotetramer and two H2A-H2B heterodimers. The octamer wraps approximately 147 bp of DNA.

The protein resides in the chromosome. Its subcellular location is the nucleus. In terms of biological role, core component of nucleosome. Nucleosomes wrap and compact DNA into chromatin, limiting DNA accessibility to the cellular machineries which require DNA as a template. Histones thereby play a central role in transcription regulation, DNA repair, DNA replication and chromosomal stability. DNA accessibility is regulated via a complex set of post-translational modifications of histones, also called histone code, and nucleosome remodeling. This chain is Histone H2B type 2-K1, found in Homo sapiens (Human).